Consider the following 305-residue polypeptide: Probable L-ribulose-5-phosphate 3-epimerase UlaE (305 aa).

It belongs to the L-ribulose-5-phosphate 3-epimerase family.

The enzyme catalyses L-ribulose 5-phosphate = L-xylulose 5-phosphate. It functions in the pathway cofactor degradation; L-ascorbate degradation; D-xylulose 5-phosphate from L-ascorbate: step 3/4. Its function is as follows. Catalyzes the isomerization of L-xylulose-5-phosphate to L-ribulose-5-phosphate. Is involved in the anaerobic L-ascorbate utilization. This Mycoplasma pneumoniae (strain ATCC 29342 / M129 / Subtype 1) (Mycoplasmoides pneumoniae) protein is Probable L-ribulose-5-phosphate 3-epimerase UlaE (ulaE).